A 247-amino-acid chain; its full sequence is Granulin (247 aa).

Belongs to the polyhedrin family.

Its function is as follows. Component of the virus occlusion bodies, which are large proteinaceous structures, that protect the virus from the outside environment for extended periods until they are ingested by insect larvae. The chain is Granulin from Pieris brassicae granulosis virus (PbGV).